The following is a 432-amino-acid chain: Pachytene checkpoint protein 2 homolog (432 aa).

The residue at position 1 (Met1) is an N-acetylmethionine. 179-186 provides a ligand contact to ATP; the sequence is GPPGTGKT.

This sequence belongs to the AAA ATPase family. PCH2 subfamily. Specifically interacts with the ligand binding domain of the thyroid receptor (TR). This interaction does not require the presence of thyroid hormone for its interaction. Interacts with proteasome subunit PSMA8; to participate in meiosis progression during spermatogenesis.

Functionally, plays a key role in chromosome recombination and chromosome structure development during meiosis. Required at early steps in meiotic recombination that leads to non-crossovers pathways. Also needed for efficient completion of homologous synapsis by influencing crossover distribution along the chromosomes affecting both crossovers and non-crossovers pathways. Also required for development of higher-order chromosome structures and is needed for synaptonemal-complex formation. In males, required for efficient synapsis of the sex chromosomes and for sex body formation. Promotes early steps of the DNA double-strand breaks (DSBs) repair process upstream of the assembly of RAD51 complexes. Required for depletion of HORMAD1 and HORMAD2 from synapsed chromosomes. This is Pachytene checkpoint protein 2 homolog (TRIP13) from Canis lupus familiaris (Dog).